We begin with the raw amino-acid sequence, 260 residues long: Phosphatidylglycerol--prolipoprotein diacylglyceryl transferase (260 aa).

3 consecutive transmembrane segments (helical) span residues 16 to 36 (LEFRWYGLMYILGFIAAYFIV), 55 to 75 (VIFSLAIGVILGGRLGYILFY), and 87 to 107 (LFAVWEGGMSFHGGLLGVILA). Arg-138 is an a 1,2-diacyl-sn-glycero-3-phospho-(1'-sn-glycerol) binding site. 2 consecutive transmembrane segments (helical) span residues 198–218 (GVVFWTFIAFYGLFRFLVEFF) and 232–252 (FSMGQLLSFPMFLLGLTMAVL).

It belongs to the Lgt family.

Its subcellular location is the cell inner membrane. The enzyme catalyses L-cysteinyl-[prolipoprotein] + a 1,2-diacyl-sn-glycero-3-phospho-(1'-sn-glycerol) = an S-1,2-diacyl-sn-glyceryl-L-cysteinyl-[prolipoprotein] + sn-glycerol 1-phosphate + H(+). It participates in protein modification; lipoprotein biosynthesis (diacylglyceryl transfer). Its function is as follows. Catalyzes the transfer of the diacylglyceryl group from phosphatidylglycerol to the sulfhydryl group of the N-terminal cysteine of a prolipoprotein, the first step in the formation of mature lipoproteins. The polypeptide is Phosphatidylglycerol--prolipoprotein diacylglyceryl transferase (Geobacter sulfurreducens (strain ATCC 51573 / DSM 12127 / PCA)).